The primary structure comprises 414 residues: Lipoyl synthase, mitochondrial (414 aa).

The N-terminal 31 residues, 1–31 (MAVSTSHFRSLCASRPLSRTAIVGHISCRSY), are a transit peptide targeting the mitochondrion. Residues 31-51 (YATTEPSPSATSTSTTTTARR) are disordered. The span at 32 to 48 (ATTEPSPSATSTSTTTT) shows a compositional bias: low complexity. Cys-131, Cys-136, Cys-142, Cys-162, Cys-166, Cys-169, and Ser-377 together coordinate [4Fe-4S] cluster. Positions 145 to 366 (GSDKSAATAT…RQRALDMGFL (222 aa)) constitute a Radical SAM core domain.

It belongs to the radical SAM superfamily. Lipoyl synthase family. [4Fe-4S] cluster is required as a cofactor.

The protein localises to the mitochondrion. The catalysed reaction is [[Fe-S] cluster scaffold protein carrying a second [4Fe-4S](2+) cluster] + N(6)-octanoyl-L-lysyl-[protein] + 2 oxidized [2Fe-2S]-[ferredoxin] + 2 S-adenosyl-L-methionine + 4 H(+) = [[Fe-S] cluster scaffold protein] + N(6)-[(R)-dihydrolipoyl]-L-lysyl-[protein] + 4 Fe(3+) + 2 hydrogen sulfide + 2 5'-deoxyadenosine + 2 L-methionine + 2 reduced [2Fe-2S]-[ferredoxin]. It functions in the pathway protein modification; protein lipoylation via endogenous pathway; protein N(6)-(lipoyl)lysine from octanoyl-[acyl-carrier-protein]: step 2/2. Catalyzes the radical-mediated insertion of two sulfur atoms into the C-6 and C-8 positions of the octanoyl moiety bound to the lipoyl domains of lipoate-dependent enzymes, thereby converting the octanoylated domains into lipoylated derivatives. This chain is Lipoyl synthase, mitochondrial, found in Aspergillus fumigatus (strain CBS 144.89 / FGSC A1163 / CEA10) (Neosartorya fumigata).